The following is a 386-amino-acid chain: 23S rRNA (uracil(747)-C(5))-methyltransferase RlmC (386 aa).

Residues Cys-7, Cys-15, Cys-18, and Cys-94 each coordinate [4Fe-4S] cluster. Residues Gln-219, Phe-248, Glu-269, and Asn-316 each contribute to the S-adenosyl-L-methionine site. Cys-343 (nucleophile) is an active-site residue.

It belongs to the class I-like SAM-binding methyltransferase superfamily. RNA M5U methyltransferase family. RlmC subfamily.

The catalysed reaction is uridine(747) in 23S rRNA + S-adenosyl-L-methionine = 5-methyluridine(747) in 23S rRNA + S-adenosyl-L-homocysteine + H(+). In terms of biological role, catalyzes the formation of 5-methyl-uridine at position 747 (m5U747) in 23S rRNA. The polypeptide is 23S rRNA (uracil(747)-C(5))-methyltransferase RlmC (Shewanella oneidensis (strain ATCC 700550 / JCM 31522 / CIP 106686 / LMG 19005 / NCIMB 14063 / MR-1)).